We begin with the raw amino-acid sequence, 186 residues long: Adenine phosphoribosyltransferase (186 aa).

It belongs to the purine/pyrimidine phosphoribosyltransferase family. As to quaternary structure, homodimer.

It localises to the cytoplasm. The enzyme catalyses AMP + diphosphate = 5-phospho-alpha-D-ribose 1-diphosphate + adenine. It functions in the pathway purine metabolism; AMP biosynthesis via salvage pathway; AMP from adenine: step 1/1. In terms of biological role, catalyzes a salvage reaction resulting in the formation of AMP, that is energically less costly than de novo synthesis. This is Adenine phosphoribosyltransferase from Xanthomonas oryzae pv. oryzae (strain MAFF 311018).